Reading from the N-terminus, the 289-residue chain is Rhodopsin (289 aa).

Over 1–7 (YLVNPAG) the chain is Extracellular. A helical transmembrane segment spans residues 8 to 32 (YAALGAYMFLLILIGSPVNFLTLYV). Over 33–44 (TLEHKKLRTPLN) the chain is Cytoplasmic. Residues 45–67 (YILLNLAVADLFMVLGGFTTTMY) form a helical membrane-spanning segment. The Extracellular segment spans residues 68 to 81 (TSMHGYSVLGRLGC). Residues C81 and C158 are joined by a disulfide bond. Residues 82–104 (ILEGFFATLGGEIALWSLVVLAI) traverse the membrane as a helical segment. A 'Ionic lock' involved in activated form stabilization motif is present at residues 105 to 107 (ERW). At 105-123 (ERWIVVCKPISNFRFTEDH) the chain is on the cytoplasmic side. The helical transmembrane segment at 124–144 (AIMGLAFSWVMALACAVPPLV) threads the bilayer. Over 145-173 (GWSRYIPEGMQCSCGVDYYTRAEGFNNES) the chain is Extracellular. N-linked (GlcNAc...) asparagine glycosylation occurs at N171. Residues 174-195 (FVIYMFIVHFLIPLSVIFFCYG) traverse the membrane as a helical segment. Residues 196-223 (RLLCAVKEAAAAQQESETTQRPEKEVTR) are Cytoplasmic-facing. The helical transmembrane segment at 224–245 (MVVIMVIAFLVCCLPNASVAWW) threads the bilayer. At 246–257 (IFCNQGSDFGPI) the chain is on the extracellular side. Residues 258-279 (FMTLPSFFAKSAAIYNPMIYIC) traverse the membrane as a helical segment. The residue at position 267 (K267) is an N6-(retinylidene)lysine. At 280-289 (MNKQFRHCMI) the chain is on the cytoplasmic side.

This sequence belongs to the G-protein coupled receptor 1 family. Opsin subfamily. Phosphorylated on some or all of the serine and threonine residues present in the C-terminal region. Post-translationally, contains one covalently linked retinal chromophore.

The protein resides in the membrane. The protein localises to the cell projection. It localises to the cilium. It is found in the photoreceptor outer segment. Functionally, photoreceptor required for image-forming vision at low light intensity. While most salt water fish species use retinal as chromophore, most freshwater fish use 3-dehydroretinal, or a mixture of retinal and 3-dehydroretinal. Light-induced isomerization of 11-cis to all-trans retinal triggers a conformational change that activates signaling via G-proteins. Subsequent receptor phosphorylation mediates displacement of the bound G-protein alpha subunit by arrestin and terminates signaling. This chain is Rhodopsin (rho), found in Limnocottus bergianus.